We begin with the raw amino-acid sequence, 455 residues long: Putative FBD-associated F-box protein At5g56400 (455 aa).

The F-box domain occupies 32 to 81 (VDKISDLPEDLLVHILSLLPTTNDIVATSGVSKRWESLWTKVHKLRFNDR). Residues 372–421 (WNQQPSYVPECLTKSLEIFEWRNYKATFRERDVAVYILKNSTCLKKTVIS) form the FBD domain.

The sequence is that of Putative FBD-associated F-box protein At5g56400 from Arabidopsis thaliana (Mouse-ear cress).